Consider the following 251-residue polypeptide: Triosephosphate isomerase (251 aa).

9-11 (NWK) contacts substrate. Residue H96 is the Electrophile of the active site. The Proton acceptor role is filled by E167. Substrate is bound by residues G173, S213, and 234–235 (GG).

It belongs to the triosephosphate isomerase family. In terms of assembly, homodimer.

The protein localises to the cytoplasm. It carries out the reaction D-glyceraldehyde 3-phosphate = dihydroxyacetone phosphate. It participates in carbohydrate biosynthesis; gluconeogenesis. Its pathway is carbohydrate degradation; glycolysis; D-glyceraldehyde 3-phosphate from glycerone phosphate: step 1/1. Functionally, involved in the gluconeogenesis. Catalyzes stereospecifically the conversion of dihydroxyacetone phosphate (DHAP) to D-glyceraldehyde-3-phosphate (G3P). In Bacteroides fragilis (strain ATCC 25285 / DSM 2151 / CCUG 4856 / JCM 11019 / LMG 10263 / NCTC 9343 / Onslow / VPI 2553 / EN-2), this protein is Triosephosphate isomerase.